Reading from the N-terminus, the 342-residue chain is Protein pelota homolog (342 aa).

Belongs to the eukaryotic release factor 1 family. Pelota subfamily. Monomer. A divalent metal cation is required as a cofactor.

It localises to the cytoplasm. Its function is as follows. May function in recognizing stalled ribosomes, interact with stem-loop structures in stalled mRNA molecules, and effect endonucleolytic cleavage of the mRNA. May play a role in the release non-functional ribosomes and degradation of damaged mRNAs. Has endoribonuclease activity. This is Protein pelota homolog from Methanocorpusculum labreanum (strain ATCC 43576 / DSM 4855 / Z).